The chain runs to 696 residues: DNA topoisomerase 6 subunit B (696 aa).

Residues 1–36 (MDDDAGDGAASGGTKRKVTAASSSAAAKGKAAGKGK) are disordered. Positions 20–36 (AASSSAAAKGKAAGKGK) are enriched in low complexity. Residues Asn-88, Asp-187, 208-209 (TK), 217-224 (GKFGLGAK), and Lys-543 contribute to the ATP site.

The protein belongs to the TOP6B family. As to quaternary structure, homodimer. Heterotetramer of two TOP6A and two TOP6B subunits. Interacts with SPO11-2 and TOP6A3. As to expression, highly expressed in flowers before pollination. Expressed in roots and shoots.

It localises to the nucleus. The catalysed reaction is ATP-dependent breakage, passage and rejoining of double-stranded DNA.. In terms of biological role, component of the DNA topoisomerase VI involved in chromatin organization and progression of endoreduplication cycles. Relaxes both positive and negative superturns and exhibits a strong decatenase activity. The B subunit binds ATP. May be involved in cell proliferation and stress tolerance. This Oryza sativa subsp. indica (Rice) protein is DNA topoisomerase 6 subunit B.